A 98-amino-acid chain; its full sequence is NADH-ubiquinone oxidoreductase chain 4L (98 aa).

A run of 3 helical transmembrane segments spans residues 1–21, 29–49, and 59–79; these read MSLVHMNILLAFTMSLTGLLM, ALLCLEGMMLSLFILMTITIL, and TPIILLVFAACEAAVGLALLV.

Belongs to the complex I subunit 4L family. Core subunit of respiratory chain NADH dehydrogenase (Complex I) which is composed of 45 different subunits.

The protein resides in the mitochondrion inner membrane. It catalyses the reaction a ubiquinone + NADH + 5 H(+)(in) = a ubiquinol + NAD(+) + 4 H(+)(out). Its function is as follows. Core subunit of the mitochondrial membrane respiratory chain NADH dehydrogenase (Complex I) which catalyzes electron transfer from NADH through the respiratory chain, using ubiquinone as an electron acceptor. Part of the enzyme membrane arm which is embedded in the lipid bilayer and involved in proton translocation. The sequence is that of NADH-ubiquinone oxidoreductase chain 4L (MT-ND4L) from Lipotes vexillifer (Yangtze river dolphin).